Here is a 320-residue protein sequence, read N- to C-terminus: Nucleoporin Nup37 (320 aa).

4 WD repeats span residues 67–113 (KEQR…FTSL), 118–157 (GHGD…ENVI), 160–200 (GLSS…TVIS), and 203–242 (SPKF…VPAD).

The protein localises to the nucleus. The protein resides in the nuclear pore complex. In terms of biological role, as part of the nuclear pore complex (NPC), has a role in its assembly and function. Functionally, (Microbial infection) Required for optimal replication of E.chaffeensis. This Drosophila melanogaster (Fruit fly) protein is Nucleoporin Nup37.